Consider the following 286-residue polypeptide: Pyridoxal kinase PdxY (286 aa).

Serine 8 provides a ligand contact to substrate. ATP is bound by residues aspartate 110 and glutamate 147. Aspartate 223 is a binding site for substrate.

It belongs to the pyridoxine kinase family. PdxY subfamily. As to quaternary structure, homodimer. Mg(2+) serves as cofactor.

It catalyses the reaction pyridoxal + ATP = pyridoxal 5'-phosphate + ADP + H(+). It participates in cofactor metabolism; pyridoxal 5'-phosphate salvage; pyridoxal 5'-phosphate from pyridoxal: step 1/1. Its function is as follows. Pyridoxal kinase involved in the salvage pathway of pyridoxal 5'-phosphate (PLP). Catalyzes the phosphorylation of pyridoxal to PLP. This chain is Pyridoxal kinase PdxY, found in Granulibacter bethesdensis (strain ATCC BAA-1260 / CGDNIH1).